Consider the following 88-residue polypeptide: Small ribosomal subunit protein bS20 (88 aa).

It belongs to the bacterial ribosomal protein bS20 family.

In terms of biological role, binds directly to 16S ribosomal RNA. The sequence is that of Small ribosomal subunit protein bS20 from Chelativorans sp. (strain BNC1).